The sequence spans 137 residues: MTLTVRVISPDKTVWDAEADEVILPSTTGQLGILSGHAPLLTALDTGVLRVRTSKSQNWQAIALLGGFAEVEEDEVTILVNGGERGDTINLEEARTAYSQAQTKLNQVPAGDRQAQIQANQAFKRARARFQAAGGLA.

Belongs to the ATPase epsilon chain family. F-type ATPases have 2 components, CF(1) - the catalytic core - and CF(0) - the membrane proton channel. CF(1) has five subunits: alpha(3), beta(3), gamma(1), delta(1), epsilon(1). CF(0) has three main subunits: a, b and c.

It localises to the cellular thylakoid membrane. Functionally, produces ATP from ADP in the presence of a proton gradient across the membrane. This Nostoc sp. (strain PCC 7120 / SAG 25.82 / UTEX 2576) protein is ATP synthase epsilon chain (atpC).